The chain runs to 125 residues: Probable 4-amino-4-deoxy-L-arabinose-phosphoundecaprenol flippase subunit ArnF (125 aa).

The Cytoplasmic segment spans residues 1-2; the sequence is MG. Residues 3 to 23 traverse the membrane as a helical segment; it reads VMWGLISVAIASLAQLSLGFA. The Periplasmic segment spans residues 24 to 33; sequence MMRLPSIAHP. The chain crosses the membrane as a helical span at residues 34–54; the sequence is LAFISGLGALNAATLALFAGL. The Cytoplasmic segment spans residues 55–76; the sequence is AGYLVSVFCWHKTLHTLALSKA. The chain crosses the membrane as a helical span at residues 77–97; that stretch reads YALLSLSYVLVWVASMLLPGL. Topologically, residues 98–100 are periplasmic; it reads QGA. Residues 101 to 121 traverse the membrane as a helical segment; it reads FSLKAMLGVLCIMAGVMLIFL. Residues 122–125 lie on the Cytoplasmic side of the membrane; it reads PARS.

The protein belongs to the ArnF family. In terms of assembly, heterodimer of ArnE and ArnF.

The protein resides in the cell inner membrane. It functions in the pathway bacterial outer membrane biogenesis; lipopolysaccharide biosynthesis. Translocates 4-amino-4-deoxy-L-arabinose-phosphoundecaprenol (alpha-L-Ara4N-phosphoundecaprenol) from the cytoplasmic to the periplasmic side of the inner membrane. The protein is Probable 4-amino-4-deoxy-L-arabinose-phosphoundecaprenol flippase subunit ArnF of Salmonella agona (strain SL483).